A 316-amino-acid chain; its full sequence is Beta-galactosidase small subunit (316 aa).

The protein belongs to the bacterial beta-galactosidase small subunit family. Heterodimer of a large (LacL) and a small subunit (LacM).

The enzyme catalyses Hydrolysis of terminal non-reducing beta-D-galactose residues in beta-D-galactosides.. In terms of biological role, component of a beta-galactosidase. The chain is Beta-galactosidase small subunit (lacM) from Lactobacillus acidophilus (strain ATCC 700396 / NCK56 / N2 / NCFM).